A 314-amino-acid polypeptide reads, in one-letter code: Lipoyl synthase (314 aa).

Residues 1–24 are disordered; it reads MMDTPIIRHPEKVRRPDNPSPRKP. 7 residues coordinate [4Fe-4S] cluster: C53, C58, C64, C79, C83, C86, and S293. The Radical SAM core domain occupies 65–282; sequence WKRRHATFMI…ADIARGKGFL (218 aa). Residues 294–308 are compositionally biased toward basic and acidic residues; it reads HHADRDFEDLRKARQ. The tract at residues 294 to 314 is disordered; the sequence is HHADRDFEDLRKARQDAAATK.

This sequence belongs to the radical SAM superfamily. Lipoyl synthase family. The cofactor is [4Fe-4S] cluster.

It localises to the cytoplasm. It carries out the reaction [[Fe-S] cluster scaffold protein carrying a second [4Fe-4S](2+) cluster] + N(6)-octanoyl-L-lysyl-[protein] + 2 oxidized [2Fe-2S]-[ferredoxin] + 2 S-adenosyl-L-methionine + 4 H(+) = [[Fe-S] cluster scaffold protein] + N(6)-[(R)-dihydrolipoyl]-L-lysyl-[protein] + 4 Fe(3+) + 2 hydrogen sulfide + 2 5'-deoxyadenosine + 2 L-methionine + 2 reduced [2Fe-2S]-[ferredoxin]. Its pathway is protein modification; protein lipoylation via endogenous pathway; protein N(6)-(lipoyl)lysine from octanoyl-[acyl-carrier-protein]: step 2/2. In terms of biological role, catalyzes the radical-mediated insertion of two sulfur atoms into the C-6 and C-8 positions of the octanoyl moiety bound to the lipoyl domains of lipoate-dependent enzymes, thereby converting the octanoylated domains into lipoylated derivatives. This chain is Lipoyl synthase, found in Rhodospirillum rubrum (strain ATCC 11170 / ATH 1.1.1 / DSM 467 / LMG 4362 / NCIMB 8255 / S1).